The following is a 732-amino-acid chain: Iron-sulfur clusters transporter ATM1, mitochondrial (732 aa).

The N-terminal 55 residues, 1-55, are a transit peptide targeting the mitochondrion; the sequence is MGFGSCSRHALFTPAAFSGSFTTMTTSCFKRVYTAQIHGGDALGKRLPSVSSFSG. Topologically, residues 56-143 are mitochondrial matrix; the sequence is QLPRHGLHRQ…KNNPNVKFRV (88 aa). Residues 71-114 are disordered; sequence STSHRRQTSPPPSPRTTSQSPTVPSKASTTPPTSLNTSKPIATE. Residues 85-95 show a composition bias toward low complexity; the sequence is RTTSQSPTVPS. The segment covering 96 to 114 has biased composition (polar residues); that stretch reads KASTTPPTSLNTSKPIATE. Residues 144 to 164 form a helical membrane-spanning segment; that stretch reads IGALTLLVAGKVLNVQVPFFF. The region spanning 144–432 is the ABC transmembrane type-1 domain; it reads IGALTLLVAG…LGTVYRELRQ (289 aa). Residues 165-181 are Mitochondrial intermembrane-facing; the sequence is KTIVDSLNVPITESTTV. Residues 182–202 form a helical membrane-spanning segment; it reads WVLAGASIAGYGAARILTTLF. At 203-262 the chain is on the mitochondrial matrix side; the sequence is GELRNAVFASVAQNAIRKVARETFEHLLNMDMKFHLERQTGGLTRAIDRGTKGISFILSS. Residues 263 to 283 form a helical membrane-spanning segment; sequence IVFHVIPTALEISMVCGILSW. Lys284 is a topological domain (mitochondrial intermembrane). A helical transmembrane segment spans residues 285–305; that stretch reads FGWDFAAVTAITMLLYTWFTI. Residues 306–378 lie on the Mitochondrial matrix side of the membrane; it reads KTTAWRTTFR…SLAALNSGQN (73 aa). Glutathione is bound by residues 311–315 and 374–377; these read RTTFR and NSGQ. A helical transmembrane segment spans residues 379–399; that stretch reads FIFSSALTMMMLLGAQGIVKG. Topologically, residues 400–405 are mitochondrial intermembrane; it reads TMTVGD. Residues 406–426 form a helical membrane-spanning segment; it reads LVLVNQLVFQLSLPLNFLGTV. Glutathione is bound at residue Gly424. Over 427 to 732 the chain is Mitochondrial matrix; that stretch reads YRELRQSLID…LEVVDEKKKQ (306 aa). The region spanning 466–702 is the ABC transporter domain; that stretch reads IEFRNVAFAY…PGGVYHRLWQ (237 aa). Residues Tyr475 and 499 to 506 each bind ATP; that span reads GPSGCGKS. Positions 708–732 are disordered; it reads STQPTDEEIERQREELEVVDEKKKQ. Positions 717-732 are enriched in basic and acidic residues; it reads ERQREELEVVDEKKKQ.

The protein belongs to the ABC transporter superfamily. ABCB family. Heavy Metal importer (TC 3.A.1.210) subfamily. As to quaternary structure, homodimer.

It localises to the mitochondrion inner membrane. Functionally, performs an essential function in the generation of cytoplasmic iron-sulfur proteins by mediating the ATP-dependent export of mitochondrial Fe/S cluster precursors synthesized by NFS1 and other mitochondrial proteins. Hydrolyzes ATP. Binds glutathione and may function by transporting a glutathione-conjugated iron-sulfur compound. Plays a role during copper stress, in a manner dependent on the copper metalloregulatory transcription factor CUF1. This chain is Iron-sulfur clusters transporter ATM1, mitochondrial, found in Cryptococcus neoformans var. grubii serotype A (strain H99 / ATCC 208821 / CBS 10515 / FGSC 9487) (Filobasidiella neoformans var. grubii).